A 148-amino-acid polypeptide reads, in one-letter code: Protein TIFY 5B (148 aa).

Positions 54 to 89 (PKQESQILTIFYNGHMCVSSDLTHLEANAILSLASR) constitute a Tify domain.

This sequence belongs to the TIFY/JAZ family. In terms of processing, ubiquitinated. Targeted for degradation by the SCF(COI1) E3 ubiquitin ligase-proteasome pathway during jasmonate signaling.

The protein resides in the nucleus. In terms of biological role, repressor of jasmonate responses. The polypeptide is Protein TIFY 5B (TIFY 5B) (Arabidopsis thaliana (Mouse-ear cress)).